Reading from the N-terminus, the 102-residue chain is Large ribosomal subunit protein uL23 (102 aa).

This sequence belongs to the universal ribosomal protein uL23 family. Part of the 50S ribosomal subunit. Contacts protein L29, and trigger factor when it is bound to the ribosome.

Functionally, one of the early assembly proteins it binds 23S rRNA. One of the proteins that surrounds the polypeptide exit tunnel on the outside of the ribosome. Forms the main docking site for trigger factor binding to the ribosome. The polypeptide is Large ribosomal subunit protein uL23 (Chromobacterium violaceum (strain ATCC 12472 / DSM 30191 / JCM 1249 / CCUG 213 / NBRC 12614 / NCIMB 9131 / NCTC 9757 / MK)).